The chain runs to 206 residues: RNA pyrophosphohydrolase (206 aa).

The 145-residue stretch at 6 to 150 folds into the Nudix hydrolase domain; that stretch reads GYRPNVGIVI…KRDVYRKVMK (145 aa). The Nudix box signature appears at 38–59; it reads GGINEGENIETAMYRELYEEVG. Residues 162–191 show a composition bias toward basic and acidic residues; sequence KPETVEKPRVERTEKRDFQKRDNQKREFRK. The disordered stretch occupies residues 162–206; sequence KPETVEKPRVERTEKRDFQKRDNQKREFRKSARMWNNSHQKGKAQ.

This sequence belongs to the Nudix hydrolase family. RppH subfamily. The cofactor is a divalent metal cation.

Functionally, accelerates the degradation of transcripts by removing pyrophosphate from the 5'-end of triphosphorylated RNA, leading to a more labile monophosphorylated state that can stimulate subsequent ribonuclease cleavage. This Actinobacillus pleuropneumoniae serotype 5b (strain L20) protein is RNA pyrophosphohydrolase.